The sequence spans 125 residues: Small ribosomal subunit protein uS13 (125 aa).

The interval 92–125 is disordered; the sequence is RRSLPVRGQRTQTNARTRKGKRKTVAGKKKATKK. Over residues 107–125 the composition is skewed to basic residues; it reads RTRKGKRKTVAGKKKATKK.

This sequence belongs to the universal ribosomal protein uS13 family. Part of the 30S ribosomal subunit. Forms a loose heterodimer with protein S19. Forms two bridges to the 50S subunit in the 70S ribosome.

Located at the top of the head of the 30S subunit, it contacts several helices of the 16S rRNA. In the 70S ribosome it contacts the 23S rRNA (bridge B1a) and protein L5 of the 50S subunit (bridge B1b), connecting the 2 subunits; these bridges are implicated in subunit movement. Contacts the tRNAs in the A and P-sites. This is Small ribosomal subunit protein uS13 from Chlorobium limicola (strain DSM 245 / NBRC 103803 / 6330).